A 1755-amino-acid chain; its full sequence is E3 ubiquitin-protein ligase UBR2 (1755 aa).

Alanine 2 carries the post-translational modification N-acetylalanine. A Glycyl lysine isopeptide (Lys-Gly) (interchain with G-Cter in ubiquitin) cross-link involves residue lysine 94. The UBR-type zinc-finger motif lies at 97 to 168; the sequence is HLCGRVFKVG…EGPYCQKHEL (72 aa). Residues cysteine 99, cysteine 112, cysteine 115, cysteine 124, cysteine 127, histidine 133, and histidine 136 each coordinate Zn(2+). Phenylalanine 148 contacts a peptide. Cysteine 149 provides a ligand contact to Zn(2+). Aspartate 150 is a binding site for a peptide. Zn(2+) is bound at residue cysteine 151. Aspartate 153 is an a peptide binding site. A Glycyl lysine isopeptide (Lys-Gly) (interchain with G-Cter in ubiquitin) cross-link involves residue lysine 158. Cysteine 163 lines the Zn(2+) pocket. Residue lysine 165 forms a Glycyl lysine isopeptide (Lys-Gly) (interchain with G-Cter in ubiquitin) linkage. Histidine 166 serves as a coordination point for Zn(2+). Glycyl lysine isopeptide (Lys-Gly) (interchain with G-Cter in ubiquitin) cross-links involve residues lysine 248, lysine 255, and lysine 470. Position 476 is a phosphoserine (serine 476). Glycyl lysine isopeptide (Lys-Gly) (interchain with G-Cter in ubiquitin) cross-links involve residues lysine 488, lysine 568, lysine 779, and lysine 789. A disordered region spans residues 1004 to 1034; that stretch reads ESSPTSPVAETEGTIMEESSRDKDKAERKRK. A coiled-coil region spans residues 1019–1054; it reads MEESSRDKDKAERKRKAEIARLRREKIMAQMSEMQR. Residues 1021-1034 are compositionally biased toward basic and acidic residues; it reads ESSRDKDKAERKRK. Positions 1108, 1111, 1168, 1170, 1173, 1176, 1210, and 1213 each coordinate Zn(2+). The segment at 1108-1214 adopts an RING-type; atypical zinc-finger fold; sequence CILCQEEQEV…NGEFLCPLCE (107 aa). The tract at residues 1261-1287 is disordered; the sequence is RKEESTPNNASTKNSENVDELQLPEGF. Residues 1266–1275 show a composition bias toward polar residues; that stretch reads TPNNASTKNS. Glycyl lysine isopeptide (Lys-Gly) (interchain with G-Cter in ubiquitin) cross-links involve residues lysine 1496, lysine 1599, and lysine 1689. A Phosphoserine modification is found at serine 1694. Tyrosine 1697 is modified (phosphotyrosine).

Belongs to the E3 ubiquitin-protein ligase UBR1-like family. As to quaternary structure, interacts with UBE2B; promotes the UBE2B-H2A interaction and the ubiquitination of histone H2A by UBE2B and UBR2. Interacts with RECQL4. Interacts with TEX19; does not lead to TEX19 degradation and stabilizes it. Interacts with CASP8. Interacts with ATXN3. Interacts with UBE2O. In terms of processing, dephosphorylated by DUSP22 at Ser-1694 and Tyr-1697, leading to subsequent ubiquitination and proteasomal degradation. Post-translationally, 'Lys-48'-linked ubiquitinated at Lys-94, Lys-779 and Lys-1599 following DUSP22-mediated dephosphorylation of Ser-1694 and Tyr-1697 which promotes UBR2 interaction with the SCF(FBW1A) E3 ubiquitin-protein ligase complex. As to expression, broadly expressed, with highest levels in skeletal muscle, kidney and pancreas. Present in acinar cells of the pancreas (at protein level).

The protein localises to the nucleus. The protein resides in the chromosome. The catalysed reaction is S-ubiquitinyl-[E2 ubiquitin-conjugating enzyme]-L-cysteine + [acceptor protein]-L-lysine = [E2 ubiquitin-conjugating enzyme]-L-cysteine + N(6)-ubiquitinyl-[acceptor protein]-L-lysine.. It functions in the pathway protein modification; protein ubiquitination. E3 ubiquitin-protein ligase which is a component of the N-end rule pathway. Recognizes and binds to proteins bearing specific N-terminal residues (N-degrons) that are destabilizing according to the N-end rule, leading to their ubiquitination and subsequent degradation. Recognizes both type-1 and type-2 N-degrons, containing positively charged amino acids (Arg, Lys and His) and bulky and hydrophobic amino acids, respectively. Does not ubiquitinate proteins that are acetylated at the N-terminus. In contrast, it strongly binds methylated N-degrons. Plays a critical role in chromatin inactivation and chromosome-wide transcriptional silencing during meiosis via ubiquitination of histone H2A. Binds leucine and is a negative regulator of the leucine-mTOR signaling pathway, thereby controlling cell growth. Required for spermatogenesis, promotes, with Tex19.1, SPO11-dependent recombination foci to accumulate and drive robust homologous chromosome synapsis. Polyubiquitinates LINE-1 retrotransposon encoded, LIRE1, which induces degradation, inhibiting LINE-1 retrotransposon mobilization. Catalyzes ubiquitination and degradation of the N-terminal part of NLRP1 following NLRP1 activation by pathogens and other damage-associated signals: ubiquitination promotes degradation of the N-terminal part and subsequent release of the cleaved C-terminal part of NLRP1, which polymerizes and forms the NLRP1 inflammasome followed by host cell pyroptosis. Plays a role in T-cell receptor signaling by inducing 'Lys-63'-linked ubiquitination of lymphocyte cell-specific kinase LCK. This activity is regulated by DUSP22, which induces 'Lys-48'-linked ubiquitination of UBR2, leading to its proteasomal degradation by SCF E3 ubiquitin-protein ligase complex. This is E3 ubiquitin-protein ligase UBR2 (UBR2) from Homo sapiens (Human).